A 352-amino-acid chain; its full sequence is Histidinol-phosphate aminotransferase (352 aa).

Lysine 221 bears the N6-(pyridoxal phosphate)lysine mark.

Belongs to the class-II pyridoxal-phosphate-dependent aminotransferase family. Histidinol-phosphate aminotransferase subfamily. As to quaternary structure, homodimer. Pyridoxal 5'-phosphate serves as cofactor.

The enzyme catalyses L-histidinol phosphate + 2-oxoglutarate = 3-(imidazol-4-yl)-2-oxopropyl phosphate + L-glutamate. It functions in the pathway amino-acid biosynthesis; L-histidine biosynthesis; L-histidine from 5-phospho-alpha-D-ribose 1-diphosphate: step 7/9. This Staphylococcus aureus (strain Mu3 / ATCC 700698) protein is Histidinol-phosphate aminotransferase.